The following is a 312-amino-acid chain: Malate dehydrogenase (312 aa).

Residues 7 to 13 (GAAGGIG) and Asp-34 each bind NAD(+). Arg-81 and Arg-87 together coordinate substrate. NAD(+) is bound by residues Asn-94 and 117-119 (ITN). Positions 119 and 153 each coordinate substrate. The Proton acceptor role is filled by His-177. Met-227 serves as a coordination point for NAD(+).

Belongs to the LDH/MDH superfamily. MDH type 1 family. As to quaternary structure, homodimer.

It catalyses the reaction (S)-malate + NAD(+) = oxaloacetate + NADH + H(+). In terms of biological role, catalyzes the reversible oxidation of malate to oxaloacetate. The polypeptide is Malate dehydrogenase (Photorhabdus laumondii subsp. laumondii (strain DSM 15139 / CIP 105565 / TT01) (Photorhabdus luminescens subsp. laumondii)).